Here is a 607-residue protein sequence, read N- to C-terminus: Elongation factor 4 (607 aa).

Positions 11 to 193 (SKIRNFSIIA…QIVEKVPAPT (183 aa)) constitute a tr-type G domain. GTP contacts are provided by residues 23–28 (DHGKST) and 140–143 (NKID).

This sequence belongs to the TRAFAC class translation factor GTPase superfamily. Classic translation factor GTPase family. LepA subfamily.

It is found in the cell membrane. The enzyme catalyses GTP + H2O = GDP + phosphate + H(+). In terms of biological role, required for accurate and efficient protein synthesis under certain stress conditions. May act as a fidelity factor of the translation reaction, by catalyzing a one-codon backward translocation of tRNAs on improperly translocated ribosomes. Back-translocation proceeds from a post-translocation (POST) complex to a pre-translocation (PRE) complex, thus giving elongation factor G a second chance to translocate the tRNAs correctly. Binds to ribosomes in a GTP-dependent manner. This is Elongation factor 4 from Bacillus mycoides (strain KBAB4) (Bacillus weihenstephanensis).